The sequence spans 409 residues: MTEYASSLLRLLSERGYIHQMTDADALDALAAKQVIPGYIGFDPTAPSLHVGSMVQIMLLRRLQQAGHKPIVLMGGGTGKIGDPSFKDEARKLMTNDVIAANVASIKTVFERFLTFGDGPTDAVMVDNADWLDRLEYIPFLREVGQHFSVNRMLSFDSVKQRLDREQSLSFLEFNYMILQAYDFRELSQRHACRLQMGGSDQWGNIVNGIELTRRMDGVEVFGVTTPLLTTADGSKMGKTAAGAVWLNEDALPAWDFWQYWRNTDDRDVGKFLRLFTDLPLDEIARLEALEGSEINAAKVVLANEVTRLVRGEEAAKAAEATAAATFAGGGLGQDLPTLSVGESEIGIVDALVGLGFAASRGEAKRLVAGGGARVDGEPVTDEGFRILVNDKEIRVSSGKKKHGILRKA.

Tyr39 contacts L-tyrosine. A 'HIGH' region motif is present at residues 44-53 (PTAPSLHVGS). Tyr176 and Gln180 together coordinate L-tyrosine. The 'KMSKS' region motif lies at 236–240 (KMGKT). Lys239 contributes to the ATP binding site. The region spanning 346 to 409 (IGIVDALVGL…KKKHGILRKA (64 aa)) is the S4 RNA-binding domain.

Belongs to the class-I aminoacyl-tRNA synthetase family. TyrS type 1 subfamily. Homodimer.

Its subcellular location is the cytoplasm. The enzyme catalyses tRNA(Tyr) + L-tyrosine + ATP = L-tyrosyl-tRNA(Tyr) + AMP + diphosphate + H(+). In terms of biological role, catalyzes the attachment of tyrosine to tRNA(Tyr) in a two-step reaction: tyrosine is first activated by ATP to form Tyr-AMP and then transferred to the acceptor end of tRNA(Tyr). The sequence is that of Tyrosine--tRNA ligase from Novosphingobium aromaticivorans (strain ATCC 700278 / DSM 12444 / CCUG 56034 / CIP 105152 / NBRC 16084 / F199).